Here is a 262-residue protein sequence, read N- to C-terminus: MKLALLDDLRTQNPIVFNISNFVTVQDVANGLNALGASPIMSEEPAEAGEMVGLAGGVCLNLGAFTQAQIQQIRTVGQQANAQHKPLVIDPVAVGAVQYRKQVATGLLADFHPDVIRGNAGEIAALADISWQAKGIDAGEGAGDLVAIAQACAQKLDCVVILSGPTDIITDGTRVVKVLNGTPLFQVHVGSGDMLSSIVAAFCAVTPDTFEAAQTACLVFAAIGQRVVQTVPDVGAGSFTVHLLDALQSTTVAQIEAVAAYE.

M41 contacts substrate. R117 and S163 together coordinate ATP. G190 is a substrate binding site.

This sequence belongs to the Thz kinase family. The cofactor is Mg(2+).

It catalyses the reaction 5-(2-hydroxyethyl)-4-methylthiazole + ATP = 4-methyl-5-(2-phosphooxyethyl)-thiazole + ADP + H(+). Its pathway is cofactor biosynthesis; thiamine diphosphate biosynthesis; 4-methyl-5-(2-phosphoethyl)-thiazole from 5-(2-hydroxyethyl)-4-methylthiazole: step 1/1. Functionally, catalyzes the phosphorylation of the hydroxyl group of 4-methyl-5-beta-hydroxyethylthiazole (THZ). This is Hydroxyethylthiazole kinase from Levilactobacillus brevis (strain ATCC 367 / BCRC 12310 / CIP 105137 / JCM 1170 / LMG 11437 / NCIMB 947 / NCTC 947) (Lactobacillus brevis).